The following is a 340-amino-acid chain: Transcription initiation factor IIB (340 aa).

Residues 16–49 (VKMICSECREDPPNLVEEFSSGDTVCGSCGLVLG) form a TFIIB-type zinc finger. Residues C20, C23, C41, and C44 each coordinate Zn(2+). 2 tandem repeats follow at residues 128-204 (MCDA…TLQR) and 239-315 (FCNR…LLHA).

This sequence belongs to the TFIIB family. In terms of assembly, associates with TFIID-IIA (DA complex) to form TFIID-IIA-IIB (DAB-complex) which is then recognized by polymerase II.

It is found in the nucleus. In terms of biological role, general factor that plays a major role in the activation of eukaryotic genes transcribed by RNA polymerase II. The polypeptide is Transcription initiation factor IIB (sua7) (Schizosaccharomyces pombe (strain 972 / ATCC 24843) (Fission yeast)).